The sequence spans 134 residues: Thyrotropin subunit beta (134 aa).

The N-terminal stretch at 1-16 (MSPFFMMSLLFGLTFG) is a signal peptide. Disulfide bonds link C22/C72, C36/C87, C39/C125, C47/C103, C51/C105, and C108/C115. N43 carries N-linked (GlcNAc...) asparagine glycosylation.

This sequence belongs to the glycoprotein hormones subunit beta family. In terms of assembly, heterodimer of a common alpha chain and a unique beta chain which confers biological specificity to thyrotropin, lutropin, follitropin and gonadotropin.

The protein resides in the secreted. Its function is as follows. Indispensable for the control of thyroid structure and metabolism. This is Thyrotropin subunit beta (TSHB) from Gallus gallus (Chicken).